Here is a 353-residue protein sequence, read N- to C-terminus: Guanine nucleotide-binding protein subunit alpha (353 aa).

Positions 1 to 26 (MGCGMSTEEKEGKARNEEIENQLKRD) are disordered. Gly-2 is lipidated: N-myristoyl glycine. Residue Cys-3 is the site of S-palmitoyl cysteine attachment. Positions 7–26 (TEEKEGKARNEEIENQLKRD) are enriched in basic and acidic residues. The G-alpha domain maps to 32-353 (NEIKMLLLGA…QENLRLCGLI (322 aa)). The segment at 35-48 (KMLLLGAGESGKST) is G1 motif. GTP is bound by residues Glu-43, Ser-44, Gly-45, Lys-46, Ser-47, Thr-48, Asp-150, Leu-175, Thr-181, Gly-203, Asn-269, Lys-270, Asp-272, and Ala-325. Mg(2+) is bound at residue Ser-47. Residues 173–181 (DVLRSRVKT) form a G2 motif region. Position 181 (Thr-181) interacts with Mg(2+). A G3 motif region spans residues 196–205 (YRMFDVGGQR). Positions 265-272 (ILFLNKID) are G4 motif. A G5 motif region spans residues 323–328 (TCATDT).

The protein belongs to the G-alpha family. G(q) subfamily. G proteins are composed of 3 units; alpha, beta and gamma. The alpha chain contains the guanine nucleotide binding site. Requires Mg(2+) as cofactor.

Guanine nucleotide-binding proteins (G proteins) are involved as modulators or transducers in various transmembrane signaling systems. This Cryphonectria parasitica (Chestnut blight fungus) protein is Guanine nucleotide-binding protein subunit alpha.